Reading from the N-terminus, the 194-residue chain is Probable transcription factor At4g00130 (194 aa).

It belongs to the GeBP family.

The chain is Probable transcription factor At4g00130 from Arabidopsis thaliana (Mouse-ear cress).